The primary structure comprises 340 residues: MYG1 protein C27H6.8 (340 aa).

Belongs to the MYG1 family.

This Caenorhabditis elegans protein is MYG1 protein C27H6.8.